The sequence spans 249 residues: Proteasome subunit alpha type-4 (249 aa).

Belongs to the peptidase T1A family. The 26S proteasome consists of a 20S proteasome core and two 19S regulatory subunits. The 20S proteasome core is composed of 28 subunits that are arranged in four stacked rings, resulting in a barrel-shaped structure. The two end rings are each formed by seven alpha subunits, and the two central rings are each formed by seven beta subunits. The catalytic chamber with the active sites is on the inside of the barrel.

It is found in the cytoplasm. The protein localises to the nucleus. In terms of biological role, the proteasome is a multicatalytic proteinase complex which is characterized by its ability to cleave peptides with Arg, Phe, Tyr, Leu, and Glu adjacent to the leaving group at neutral or slightly basic pH. The proteasome has an ATP-dependent proteolytic activity. The chain is Proteasome subunit alpha type-4 (PAC1) from Petunia hybrida (Petunia).